Here is a 346-residue protein sequence, read N- to C-terminus: Phosphoribosylformylglycinamidine cyclo-ligase (346 aa).

It belongs to the AIR synthase family.

It is found in the cytoplasm. It catalyses the reaction 2-formamido-N(1)-(5-O-phospho-beta-D-ribosyl)acetamidine + ATP = 5-amino-1-(5-phospho-beta-D-ribosyl)imidazole + ADP + phosphate + H(+). Its pathway is purine metabolism; IMP biosynthesis via de novo pathway; 5-amino-1-(5-phospho-D-ribosyl)imidazole from N(2)-formyl-N(1)-(5-phospho-D-ribosyl)glycinamide: step 2/2. This chain is Phosphoribosylformylglycinamidine cyclo-ligase, found in Bacillus mycoides (strain KBAB4) (Bacillus weihenstephanensis).